The chain runs to 409 residues: MREEFLEEIPLDAPPEEAKELRTEVMTLNVGPQHPSTHGVLRLMVTLSGEEVLEVVPHIGYLHTGFEKTMEHRTYLQNITYTPRMDYLHSFAHDLAYALAVEKLLGAVVPPRAETIRVILNELSRLASHLVFLGTGLLDLGALTPFFYAFRERETILDLFEWVTGQRFHHNYIRIGGVKEDLPEEFVPELKKLLEVLPHRIDEYEALFAESPIFYERARGVGVIPPEVAIDLGLTGGSLRASGVNYDVRKAYPYSGYETYTFDVPLGERGDVFDRMLVRIREMRESVKIIKQALERLEPGPVRDPNPQITPPPRHLLETSMEAVIYHFKHYTEGFHPPKGEVYVPTESARGELGYYIVSDGGSMPYRVKVRAPSFVNLQSLPYACKGEQVPDMVAIIASLDPVMGDVDR.

The protein belongs to the complex I 49 kDa subunit family. As to quaternary structure, NDH-1 is composed of 15 different subunits, Nqo1 to Nqo15. The complex has a L-shaped structure, with the hydrophobic arm (subunits Nqo7, Nqo8 and Nqo10 to Nqo14) embedded in the membrane and the hydrophilic peripheral arm (subunits Nqo1 to Nqo6, Nqo9 and Nqo15) protruding into the bacterial cytoplasm. The hydrophilic domain contains all the redox centers. This subunit interacts extensively with Nqo6.

The protein localises to the cell membrane. The catalysed reaction is a quinone + NADH + 5 H(+)(in) = a quinol + NAD(+) + 4 H(+)(out). NDH-1 shuttles electrons from NADH, via FMN and iron-sulfur (Fe-S) centers, to quinones in the respiratory chain. The immediate electron acceptor for the enzyme in this species is menaquinone. Couples the redox reaction to proton translocation (for every two electrons transferred, four hydrogen ions are translocated across the cytoplasmic membrane), and thus conserves the redox energy in a proton gradient required for the synthesis of ATP. The Nqo4 subunit may contain the quinone-binding site. This Thermus thermophilus (strain ATCC 27634 / DSM 579 / HB8) protein is NADH-quinone oxidoreductase subunit 4 (nqo4).